Here is a 384-residue protein sequence, read N- to C-terminus: MLYIPQFSIYFCLGYLLLFCKISNAVKQSWEINQELITEANKEHTVFGDMLLTPAQLIRYENSKDSDLSIRGVSIKGSSMNRWSNNIVPYVISPQYSPAQKQILVSSLRYFERVSCFKFVERTTQNDYLFIVPLDGCYSYVGKIGGRQTLSLAADCIADYIIWHEMMHAIGFEHEHQRPDRDSFIRVDYANVIPGQMINFDKLKTSHVEYPDIYDFKSIMHYDGYAFGRVDTARRVRLATMTPLKPGVTLEDNMKFTATDIEKLNRLGQCGARGGQYSNQGVVASTCQDVATAVSCEGNRRRGMCKNPFYKQMMIKSCQKTCRLCSYTRMIDEDDDLTPNTTVKSVKCEDKHPRCDIYSHNGFCTLPFYDDVRYQLCAKTCNLC.

The first 25 residues, 1–25 (MLYIPQFSIYFCLGYLLLFCKISNA), serve as a signal peptide directing secretion. A Peptidase M12A domain is found at 73–271 (VSIKGSSMNR…EKLNRLGQCG (199 aa)). 5 disulfides stabilise this stretch: Cys116-Cys270, Cys137-Cys156, Cys287-Cys325, Cys296-Cys318, and Cys305-Cys322. His164 is a binding site for Zn(2+). Glu165 is a catalytic residue. The Zn(2+) site is built by His168 and His174. Residues 287 to 325 (CQDVATAVSCEGNRRRGMCKNPFYKQMMIKSCQKTCRLC) enclose the ShKT 1 domain. Asn340 is a glycosylation site (N-linked (GlcNAc...) asparagine). 3 disulfides stabilise this stretch: Cys348/Cys384, Cys355/Cys377, and Cys364/Cys381. The region spanning 348-384 (CEDKHPRCDIYSHNGFCTLPFYDDVRYQLCAKTCNLC) is the ShKT 2 domain.

The cofactor is Zn(2+). In terms of tissue distribution, expressed in pharyngeal glands.

The protein resides in the secreted. In terms of biological role, metalloprotease. This Caenorhabditis elegans protein is Zinc metalloproteinase nas-12 (nas-12).